A 201-amino-acid chain; its full sequence is MKTLFFATTNENKINEVKNILDMPNLNLVVPKNFNIKETGTTFKENSLLKAKALFAILNKNQNVFGEDSGLCIEALNLEPGIYSKRYDTYKLCKKLSTNEKNQLILDLMKNEKNRKAYFICNISYISKDRQILNFEGIIKGEIALSLNDDKNYGFGYDSIFLTKNNKKLSDLTLEEKNKISHRGIAFSKFKKFLLKSLFNN.

Position 8–13 (8–13 (TTNENK)) interacts with substrate. D68 acts as the Proton acceptor in catalysis. D68 serves as a coordination point for Mg(2+). Residues S69, 155 to 158 (FGYD), K177, and 182 to 183 (HR) contribute to the substrate site.

Belongs to the HAM1 NTPase family. As to quaternary structure, homodimer. It depends on Mg(2+) as a cofactor.

It carries out the reaction XTP + H2O = XMP + diphosphate + H(+). The enzyme catalyses dITP + H2O = dIMP + diphosphate + H(+). The catalysed reaction is ITP + H2O = IMP + diphosphate + H(+). In terms of biological role, pyrophosphatase that catalyzes the hydrolysis of nucleoside triphosphates to their monophosphate derivatives, with a high preference for the non-canonical purine nucleotides XTP (xanthosine triphosphate), dITP (deoxyinosine triphosphate) and ITP. Seems to function as a house-cleaning enzyme that removes non-canonical purine nucleotides from the nucleotide pool, thus preventing their incorporation into DNA/RNA and avoiding chromosomal lesions. This is dITP/XTP pyrophosphatase from Borrelia garinii subsp. bavariensis (strain ATCC BAA-2496 / DSM 23469 / PBi) (Borreliella bavariensis).